We begin with the raw amino-acid sequence, 344 residues long: N-acetyl-gamma-glutamyl-phosphate reductase (344 aa).

Cysteine 150 is a catalytic residue.

This sequence belongs to the NAGSA dehydrogenase family. Type 1 subfamily.

It localises to the cytoplasm. The enzyme catalyses N-acetyl-L-glutamate 5-semialdehyde + phosphate + NADP(+) = N-acetyl-L-glutamyl 5-phosphate + NADPH + H(+). The protein operates within amino-acid biosynthesis; L-arginine biosynthesis; N(2)-acetyl-L-ornithine from L-glutamate: step 3/4. Catalyzes the NADPH-dependent reduction of N-acetyl-5-glutamyl phosphate to yield N-acetyl-L-glutamate 5-semialdehyde. The sequence is that of N-acetyl-gamma-glutamyl-phosphate reductase from Pseudomonas paraeruginosa (strain DSM 24068 / PA7) (Pseudomonas aeruginosa (strain PA7)).